The following is a 747-amino-acid chain: NAD(P)H-quinone oxidoreductase subunit 5, chloroplastic (747 aa).

Helical transmembrane passes span 9–29 (WIIP…LLLF), 40–60 (WAFP…DLSI), 89–109 (IDSL…LVLI), 125–145 (FAYL…SNLI), 147–167 (VYIF…FWFT), 185–205 (GDFG…SLEF), 219–239 (NEVN…GSVA), 258–278 (TPIS…FLVA), 280–300 (LLPF…IGII), 327–347 (LGYM…FHLI), 354–374 (ALLF…VGYS), 396–416 (TAFL…CFWS), 425–445 (WLYS…TAFY), 552–572 (LFSM…GISF), 606–626 (FFTN…IASF), and 727–747 (YILF…SFFI).

Belongs to the complex I subunit 5 family. As to quaternary structure, NDH is composed of at least 16 different subunits, 5 of which are encoded in the nucleus.

Its subcellular location is the plastid. The protein resides in the chloroplast thylakoid membrane. It carries out the reaction a plastoquinone + NADH + (n+1) H(+)(in) = a plastoquinol + NAD(+) + n H(+)(out). The enzyme catalyses a plastoquinone + NADPH + (n+1) H(+)(in) = a plastoquinol + NADP(+) + n H(+)(out). In terms of biological role, NDH shuttles electrons from NAD(P)H:plastoquinone, via FMN and iron-sulfur (Fe-S) centers, to quinones in the photosynthetic chain and possibly in a chloroplast respiratory chain. The immediate electron acceptor for the enzyme in this species is believed to be plastoquinone. Couples the redox reaction to proton translocation, and thus conserves the redox energy in a proton gradient. The chain is NAD(P)H-quinone oxidoreductase subunit 5, chloroplastic (ndhF) from Lotus japonicus (Lotus corniculatus var. japonicus).